The chain runs to 111 residues: Large ribosomal subunit protein eL31 (111 aa).

This sequence belongs to the eukaryotic ribosomal protein eL31 family.

The chain is Large ribosomal subunit protein eL31 (RPL31) from Encephalitozoon cuniculi (strain GB-M1) (Microsporidian parasite).